We begin with the raw amino-acid sequence, 457 residues long: NADP-specific glutamate dehydrogenase (457 aa).

The active site involves K111.

The protein belongs to the Glu/Leu/Phe/Val dehydrogenases family. In terms of assembly, homohexamer.

It carries out the reaction L-glutamate + NADP(+) + H2O = 2-oxoglutarate + NH4(+) + NADPH + H(+). The chain is NADP-specific glutamate dehydrogenase (gdhA) from Agaricus bisporus (White button mushroom).